Here is a 202-residue protein sequence, read N- to C-terminus: Solute carrier family 66 member 3 (202 aa).

An N-terminal signal peptide occupies residues 1–19 (MEAALLGLCNWSTLGVCAA). 4 consecutive transmembrane segments (helical) span residues 33 to 53 (SARG…LVFL), 64 to 84 (LTYL…LCIF), 97 to 117 (IAVL…IDLA), and 171 to 191 (FTIL…TVTV).

The protein resides in the membrane. The polypeptide is Solute carrier family 66 member 3 (Homo sapiens (Human)).